A 169-amino-acid chain; its full sequence is Crossover junction endodeoxyribonuclease RuvC (169 aa).

Residues D13, E73, and D145 contribute to the active site. The Mg(2+) site is built by D13, E73, and D145.

This sequence belongs to the RuvC family. In terms of assembly, homodimer which binds Holliday junction (HJ) DNA. The HJ becomes 2-fold symmetrical on binding to RuvC with unstacked arms; it has a different conformation from HJ DNA in complex with RuvA. In the full resolvosome a probable DNA-RuvA(4)-RuvB(12)-RuvC(2) complex forms which resolves the HJ. Mg(2+) is required as a cofactor.

The protein localises to the cytoplasm. The enzyme catalyses Endonucleolytic cleavage at a junction such as a reciprocal single-stranded crossover between two homologous DNA duplexes (Holliday junction).. Functionally, the RuvA-RuvB-RuvC complex processes Holliday junction (HJ) DNA during genetic recombination and DNA repair. Endonuclease that resolves HJ intermediates. Cleaves cruciform DNA by making single-stranded nicks across the HJ at symmetrical positions within the homologous arms, yielding a 5'-phosphate and a 3'-hydroxyl group; requires a central core of homology in the junction. The consensus cleavage sequence is 5'-(A/T)TT(C/G)-3'. Cleavage occurs on the 3'-side of the TT dinucleotide at the point of strand exchange. HJ branch migration catalyzed by RuvA-RuvB allows RuvC to scan DNA until it finds its consensus sequence, where it cleaves and resolves the cruciform DNA. The chain is Crossover junction endodeoxyribonuclease RuvC from Solidesulfovibrio magneticus (strain ATCC 700980 / DSM 13731 / RS-1) (Desulfovibrio magneticus).